Here is a 162-residue protein sequence, read N- to C-terminus: Photosystem II extrinsic protein V (162 aa).

A signal peptide spans 1-25 (MLKRCLWLVVTVLFAWQVFNGTAIA). Heme c-binding residues include C62, C65, H66, and H117.

The protein belongs to the cytochrome c family. PsbV subfamily. In terms of assembly, PSII is composed of 1 copy each of membrane proteins PsbA, PsbB, PsbC, PsbD, PsbE, PsbF, PsbH, PsbI, PsbJ, PsbK, PsbL, PsbM, PsbT, PsbX, PsbY, PsbZ, Psb30/Ycf12, peripheral proteins PsbO, CyanoQ (PsbQ), PsbU, PsbV and a large number of cofactors. It forms dimeric complexes. It depends on heme c as a cofactor.

It localises to the cellular thylakoid membrane. Its function is as follows. One of the extrinsic, lumenal subunits of photosystem II (PSII). PSII is a light-driven water plastoquinone oxidoreductase, using light energy to abstract electrons from H(2)O, generating a proton gradient subsequently used for ATP formation. The extrinsic proteins stabilize the structure of photosystem II oxygen-evolving complex (OEC), the ion environment of oxygen evolution and protect the OEC against heat-induced inactivation. Low-potential cytochrome c that plays a role in the OEC of PSII. This is Photosystem II extrinsic protein V from Cyanothece sp. (strain PCC 7425 / ATCC 29141).